The chain runs to 264 residues: GATA transcription factor 2 (264 aa).

A compositionally biased stretch (low complexity) spans 29 to 42 (SSSGGSTAATSSSS). 2 disordered regions span residues 29 to 57 (SSSGGSTAATSSSSFPPPQNPSFHHHHLP) and 96 to 192 (NPLG…TPQW). Residues 101-110 (TMTSVKTETS) show a composition bias toward polar residues. The Nuclear localization signal motif lies at 114 to 121 (KPRSKRSR). Over residues 155–164 (SGGGGGGGGR) the composition is skewed to gly residues. Residues 175-229 (GGGMRRCTHCASEKTPQWRTGPLGPKTLCNACGVRFKSGRLVPEYRPASSPTFVL) form a GATA-type zinc finger.

The protein belongs to the type IV zinc-finger family. Class A subfamily. Mostly expressed in roots. Also expressed in flowers and leaves, and to a lower extent in stems.

Its subcellular location is the nucleus. Functionally, transcriptional activator that specifically binds 5'-GATA-3' or 5'-GAT-3' motifs within gene promoters. May be involved in the regulation of some light-responsive genes. The polypeptide is GATA transcription factor 2 (GATA2) (Arabidopsis thaliana (Mouse-ear cress)).